The primary structure comprises 171 residues: Dual specificity protein phosphatase OPG106 (171 aa).

A Tyrosine-protein phosphatase domain is found at 23-171 (SPTIMTRVTN…IIEKYVIDKN (149 aa)). Catalysis depends on C110, which acts as the Phosphocysteine intermediate.

Belongs to the protein-tyrosine phosphatase family. Non-receptor class dual specificity subfamily. As to quaternary structure, homodimer.

The protein localises to the virion. It localises to the host cytoplasm. It catalyses the reaction O-phospho-L-tyrosyl-[protein] + H2O = L-tyrosyl-[protein] + phosphate. The enzyme catalyses O-phospho-L-seryl-[protein] + H2O = L-seryl-[protein] + phosphate. With respect to regulation, inhibited by NSC-62914, NSC-28086, NSC-105687, NSC-23173, 540211 and 217691 with IC50 values of 48, 51, 212, 342, 4 and 11 uM, respectively. Functionally, serine/tyrosine phosphatase which down-regulates cellular antiviral response by dephosphorylating activated host STAT1 and blocking interferon (IFN)-stimulated innate immune responses. Dephosphorylates the OPG144 protein. The sequence is that of Dual specificity protein phosphatase OPG106 (OPG106) from Homo sapiens (Human).